A 320-amino-acid polypeptide reads, in one-letter code: Thiamine thiazole synthase (320 aa).

Substrate is bound by residues Cys82, 103-104, Gly111, and Val176; that span reads EA. Cys209 bears the 2,3-didehydroalanine (Cys) mark. Residues Asp211, His226, Met278, and 288-290 contribute to the substrate site; that span reads RMG.

Belongs to the THI4 family. Homooctamer. Fe cation serves as cofactor. In terms of processing, during the catalytic reaction, a sulfide is transferred from Cys-209 to a reaction intermediate, generating a dehydroalanine residue.

The protein localises to the cytoplasm. It localises to the nucleus. It carries out the reaction [ADP-thiazole synthase]-L-cysteine + glycine + NAD(+) = [ADP-thiazole synthase]-dehydroalanine + ADP-5-ethyl-4-methylthiazole-2-carboxylate + nicotinamide + 3 H2O + 2 H(+). Functionally, involved in biosynthesis of the thiamine precursor thiazole. Catalyzes the conversion of NAD and glycine to adenosine diphosphate 5-(2-hydroxyethyl)-4-methylthiazole-2-carboxylic acid (ADT), an adenylated thiazole intermediate. The reaction includes an iron-dependent sulfide transfer from a conserved cysteine residue of the protein to a thiazole intermediate. The enzyme can only undergo a single turnover, which suggests it is a suicide enzyme. May have additional roles in adaptation to various stress conditions and in DNA damage tolerance. The polypeptide is Thiamine thiazole synthase (sti35) (Fusarium oxysporum f. sp. lycopersici (strain 4287 / CBS 123668 / FGSC 9935 / NRRL 34936) (Fusarium vascular wilt of tomato)).